A 763-amino-acid polypeptide reads, in one-letter code: Putative alpha-1,3-mannosyltransferase MNN15 (763 aa).

Over 1 to 7 (MRFTLKK) the chain is Cytoplasmic. A helical membrane pass occupies residues 8 to 28 (IFFVFLTLLIISIGYLLLQSV). The Lumenal portion of the chain corresponds to 29–763 (DLQRIRELLH…KDATTVRLRI (735 aa)). N-linked (GlcNAc...) asparagine glycosylation is found at N71, N157, and N169. Residues 617-659 (LVPPDLPNQREPGSPPDTKPEMEFRKSWKSRKKDTDEINEKLP) form a disordered region. Positions 649-659 (KDTDEINEKLP) are enriched in basic and acidic residues.

This sequence belongs to the MNN1/MNT family.

The protein resides in the golgi apparatus membrane. It functions in the pathway protein modification; protein glycosylation. Its function is as follows. Responsible for addition of the terminal mannose residues to the outer chain of core N-linked polysaccharides and to O-linked mannotriose. Implicated in late Golgi modifications. This Candida albicans (strain SC5314 / ATCC MYA-2876) (Yeast) protein is Putative alpha-1,3-mannosyltransferase MNN15 (MNN15).